We begin with the raw amino-acid sequence, 230 residues long: RING finger protein 141 (230 aa).

A lipid anchor (N-myristoyl glycine) is attached at glycine 2. The RING-type zinc finger occupies 155 to 192; sequence CCICMDGRADLILPCAHSFCQKCIDKWSDRHRNCPICR.

The protein resides in the membrane. Functionally, may be involved in spermatogenesis. The protein is RING finger protein 141 (RNF141) of Pongo abelii (Sumatran orangutan).